The following is a 295-amino-acid chain: Beta-lactamase-like protein 2 homolog (295 aa).

Positions 79, 81, 83, 84, 141, 160, and 195 each coordinate Zn(2+).

It belongs to the metallo-beta-lactamase superfamily. Glyoxalase II family.

The chain is Beta-lactamase-like protein 2 homolog from Caenorhabditis elegans.